Reading from the N-terminus, the 151-residue chain is Large ribosomal subunit protein bL9 (151 aa).

The protein belongs to the bacterial ribosomal protein bL9 family.

Its function is as follows. Binds to the 23S rRNA. In Prochlorococcus marinus (strain MIT 9301), this protein is Large ribosomal subunit protein bL9.